We begin with the raw amino-acid sequence, 144 residues long: Eukaryotic translation initiation factor 1A, X-chromosomal (144 aa).

Positions 1-15 (MPKNKGKGGKNRRRG) are enriched in basic residues. 2 disordered regions span residues 1–26 (MPKNKGKGGKNRRRGKNENESEKREL) and 114–144 (KINETDTFGPGDDDEIQFDDIGDDDEDIDDI). Over residues 16-26 (KNENESEKREL) the composition is skewed to basic and acidic residues. Residues 22–96 (EKRELVFKED…NKADVILKYN (75 aa)) enclose the S1-like domain. Positions 124-144 (GDDDEIQFDDIGDDDEDIDDI) are enriched in acidic residues.

The protein belongs to the eIF-1A family. Component of the 43S pre-initiation complex (43S PIC), which is composed of the 40S ribosomal subunit, EIF1, eIF1A (EIF1AX), eIF3 complex, EIF5 and eIF2-GTP-initiator tRNA complex (eIF2 ternary complex). Interacts with EIF5; this interaction contributes to the maintenance of EIF1 within the open 43S PIC. Interacts through its C-terminal domain (CTD) with the CTD of EIF5B; from the location of the start codon by the 43S complex until the formation of the 80S complex. In terms of assembly, (Microbial infection) Interacts with human respiratory syncytial virus (HRSV) nucleoprotein; this interaction recruits EIF1AX to the viral replication complex to facilitate viral genomic RNA synthesis and virus production.

It localises to the cytoplasm. Functionally, component of the 43S pre-initiation complex (43S PIC), which binds to the mRNA cap-proximal region, scans mRNA 5'-untranslated region, and locates the initiation codon. This protein enhances formation of the cap-proximal complex. Together with EIF1, facilitates scanning, start codon recognition, promotion of the assembly of 48S complex at the initiation codon (43S PIC becomes 48S PIC after the start codon is reached), and dissociation of aberrant complexes. After start codon location, together with EIF5B orients the initiator methionine-tRNA in a conformation that allows 60S ribosomal subunit joining to form the 80S initiation complex. Is released after 80S initiation complex formation, just after GTP hydrolysis by EIF5B, and before release of EIF5B. Its globular part is located in the A site of the 40S ribosomal subunit. Its interaction with EIF5 during scanning contribute to the maintenance of EIF1 within the open 43S PIC. In contrast to yeast orthologs, does not bind EIF1. This Homo sapiens (Human) protein is Eukaryotic translation initiation factor 1A, X-chromosomal (EIF1AX).